We begin with the raw amino-acid sequence, 1371 residues long: F-actin-uncapping protein LRRC16A (1371 aa).

Met1 is modified (N-acetylmethionine). Ser122 is modified (phosphoserine). LRR repeat units lie at residues 245-269, 275-298, 304-327, 336-363, 391-418, 423-447, 481-506, 543-566, 570-593, and 654-678; these read SNRLEELVLENAGLRTDFAQKLASA, NSGLHTINLAGNPLEDRGVSSLSI, PKGLKHLNLSKTSLSPKGVNSLSQ, ASTLVHLDLSGNVLRGDDLSHMYNFLAQ, LQYLAVLNLSRTVFSHRKGKEVPPSFKQ, SLALMHINLSGTKLSPEPLKALLLG, IHNITSLDISDNGLESDLSTLIVWLS, ESPLQSLSLADSKLKTEVTIIINA, NTSLTKVDISGNGMGDMGAKMLAK, and LQKIENYLLRNHETRKYLQEQAYRL. Residues 710-734 adopt a coiled-coil conformation; the sequence is GDAIQEDLKSAERLMRDAKNSKTLL. Thr916 is modified (phosphothreonine). 3 disordered regions span residues 957 to 1000, 1036 to 1159, and 1172 to 1371; these read PFPS…QPTQ, KMDS…RRYG, and KAKQ…FIFV. The stretch at 958-981 is one LRR 11 repeat; that stretch reads FPSLRQEKRSSGFISELPSEEGKK. The inhibits capping activity of CAPZA2 stretch occupies residues 958–1082; the sequence is FPSLRQEKRS…LIKSRSKSER (125 aa). Ser968 is subject to Phosphoserine. 2 stretches are compositionally biased toward basic and acidic residues: residues 977–986 and 1036–1061; these read EEGKKLEHFT and KMDSKKWSTRGSESHELNEGGDEKKK. The segment at 1055 to 1089 is necessary for localization at the cell membrane; sequence GGDEKKKRDSRKSSGFLNLIKSRSKSERPPTILMT. 2 positions are modified to phosphoserine: Ser1067 and Ser1094. Composition is skewed to basic and acidic residues over residues 1106–1130 and 1139–1148; these read CPRKDTKAAEHNGNSERIEEIKTPD and EIGKVERSDS. The span at 1190 to 1199 shows a compositional bias: polar residues; sequence AVSQDSSSPA. Thr1228 bears the Phosphothreonine mark. Over residues 1231 to 1243 the composition is skewed to basic and acidic residues; that stretch reads KNTKAEPKAEAGS. Low complexity predominate over residues 1244–1265; that stretch reads RSRSSSSTPTSPKPLLQSPKPS. Phosphoserine occurs at positions 1280, 1288, 1291, 1315, 1324, and 1331. Residues 1313-1326 show a composition bias toward polar residues; the sequence is QSSPQPSPRTFSQE. Basic and acidic residues predominate over residues 1340-1353; the sequence is QEQKQRSSSKDGHQ. Residue Ser1360 is modified to Phosphoserine.

This sequence belongs to the CARMIL family. In terms of assembly, homodimer. Interacts (via C-terminus) with heterodimer capping protein (CP); this interaction uncaps barbed ends capped by CP, enhances barbed-end actin polymerization and promotes lamellipodial formation and cell migration. Interacts with heterodimer capping protein (CP). Interacts with MYO1E. Interacts with TRIO. In terms of tissue distribution, expressed in lung, placenta, small intestine, liver, thymus, colon, skeletal muscle, heart and brain. Higher expression in kidney.

The protein localises to the cytoplasm. It is found in the cytoskeleton. The protein resides in the cell membrane. It localises to the cell projection. Its subcellular location is the lamellipodium. Its function is as follows. Cell membrane-cytoskeleton-associated protein that plays a role in the regulation of actin polymerization at the barbed end of actin filaments. Prevents F-actin heterodimeric capping protein (CP) activity at the leading edges of migrating cells, and hence generates uncapped barbed ends and enhances actin polymerization, however, seems unable to nucleate filaments. Plays a role in lamellipodial protrusion formations and cell migration. This is F-actin-uncapping protein LRRC16A from Homo sapiens (Human).